A 544-amino-acid polypeptide reads, in one-letter code: Formate--tetrahydrofolate ligase (544 aa).

63-70 (TPAGEGKS) contributes to the ATP binding site.

Belongs to the formate--tetrahydrofolate ligase family.

It carries out the reaction (6S)-5,6,7,8-tetrahydrofolate + formate + ATP = (6R)-10-formyltetrahydrofolate + ADP + phosphate. It functions in the pathway one-carbon metabolism; tetrahydrofolate interconversion. The chain is Formate--tetrahydrofolate ligase from Fusobacterium nucleatum subsp. nucleatum (strain ATCC 25586 / DSM 15643 / BCRC 10681 / CIP 101130 / JCM 8532 / KCTC 2640 / LMG 13131 / VPI 4355).